Consider the following 1545-residue polypeptide: ATP-binding cassette sub-family C member 2 (1545 aa).

At 1–27 the chain is on the extracellular side; that stretch reads MLEKFCNSTFWNSSFLDSPEADLPLCF. N-linked (GlcNAc...) asparagine glycosylation is found at N7 and N12. A helical membrane pass occupies residues 28–48; sequence EQTVLVWIPLGYLWLLAPWQL. The Cytoplasmic portion of the chain corresponds to 49-68; that stretch reads LHVYKSRTKRSSTTKLYLAK. A helical membrane pass occupies residues 69–89; that stretch reads QVFVGFLLILAAIELALVLTE. Residues 90 to 93 are Extracellular-facing; sequence DSGQ. Residues 94-114 form a helical membrane-spanning segment; it reads ATVPAVRYTNPSLYLGTWLLV. Over 115-126 the chain is Cytoplasmic; that stretch reads LLIQYSRQWCVQ. The helical transmembrane segment at 127–147 threads the bilayer; it reads KNSWFLSLFWILSILCGTFQF. At 148–165 the chain is on the extracellular side; it reads QTLIRTLLQGDNSNLAYS. Residues 166-186 form a helical membrane-spanning segment; sequence CLFFISYGFQILILIFSAFSE. At 187–313 the chain is on the cytoplasmic side; sequence NNESSNNPSS…DVPKSWLMKA (127 aa). The disordered stretch occupies residues 253–284; it reads ARRALQRRQEKSSQQNSGARLPGLNKNQSQSQ. A phosphoserine mark is found at S281 and S283. A helical transmembrane segment spans residues 314-334; it reads LFKTFYMVLLKSFLLKLVNDI. An ABC transmembrane type-1 1 domain is found at 322–605; sequence LLKSFLLKLV…LPMMISSMLQ (284 aa). The Extracellular segment spans residues 335 to 360; sequence FTFVSPQLLKLLISFASDRDTYLWIG. A helical transmembrane segment spans residues 361 to 381; the sequence is YLCAILLFTAALIQSFCLQCY. Topologically, residues 382–437 are cytoplasmic; sequence FQLCFKLGVKVRTAIMASVYKKALTLSNLARKEYTVGETVNLMSVDAQKLMDVTNF. A helical membrane pass occupies residues 438–458; sequence MHMLWSSVLQIVLSIFFLWRE. Residues 459–461 lie on the Extracellular side of the membrane; that stretch reads LGP. The chain crosses the membrane as a helical span at residues 462–482; the sequence is SVLAGVGVMVLVIPINAILST. The Cytoplasmic portion of the chain corresponds to 483–544; the sequence is KSKTIQVKNM…NLLAFSQLQC (62 aa). The helical transmembrane segment at 545-565 threads the bilayer; it reads VVIFVFQLTPVLVSVVTFSVY. At 566–587 the chain is on the extracellular side; that stretch reads VLVDSNNILDAQKAFTSITLFN. The chain crosses the membrane as a helical span at residues 588–608; it reads ILRFPLSMLPMMISSMLQASV. Topologically, residues 609-971 are cytoplasmic; it reads STERLEKYLG…VKFSIYLEYL (363 aa). The ABC transporter 1 domain occupies 637 to 861; the sequence is MQFSEASFTW…KGEFAKNLKT (225 aa). 671-678 is a binding site for ATP; the sequence is GPVGSGKS. S878, S926, S930, and S938 each carry phosphoserine. A helical transmembrane segment spans residues 972–992; it reads QAIGLFSIFFIILAFVMNSVA. Residues 979–1264 form the ABC transmembrane type-1 2 domain; sequence IFFIILAFVM…LVRMTSEIET (286 aa). Over 993–1033 the chain is Extracellular; sequence FIGSNLWLSAWTSDSKIFNSTDYPASQRDMRVGVYGALGLA. N1011 carries an N-linked (GlcNAc...) asparagine glycan. A helical membrane pass occupies residues 1034–1054; the sequence is QGIFVFIAHFWSAFGFVHASN. Over 1055–1097 the chain is Cytoplasmic; it reads ILHKQLLNNILRAPMRFFDTTPTGRIVNRFAGDISTVDDTLPQ. A helical transmembrane segment spans residues 1098 to 1118; sequence SLRSWITCFLGIISTLVMICM. A topological domain (extracellular) is located at residue A1119. Residues 1120 to 1140 traverse the membrane as a helical segment; it reads TPVFTIIVIPLGIIYVSVQMF. The Cytoplasmic segment spans residues 1141 to 1211; it reads YVSTSRQLRR…TSNRWLAIRL (71 aa). Residues 1212-1232 form a helical membrane-spanning segment; sequence ELVGNLTVFFSALMMVIYRDT. Topologically, residues 1233 to 1234 are extracellular; sequence LS. The helical transmembrane segment at 1235–1255 threads the bilayer; it reads GDTVGFVLSNALNITQTLNWL. The Cytoplasmic portion of the chain corresponds to 1256-1545; that stretch reads VRMTSEIETN…GIENVNSTKF (290 aa). In terms of domain architecture, ABC transporter 2 spans 1300-1534; the sequence is IQFNNYQVRY…PGPFYFMAKE (235 aa). Residue 1334 to 1341 coordinates ATP; that stretch reads GRTGAGKS. Phosphoserine is present on S1438.

This sequence belongs to the ABC transporter superfamily. ABCC family. Conjugate transporter (TC 3.A.1.208) subfamily. As to expression, expressed by polarized cells in liver, kidney and intestine. The highest expression is found in liver. Expressed in small intestine.

It localises to the apical cell membrane. It carries out the reaction ATP + H2O + xenobioticSide 1 = ADP + phosphate + xenobioticSide 2.. The enzyme catalyses an S-substituted glutathione(in) + ATP + H2O = an S-substituted glutathione(out) + ADP + phosphate + H(+). The catalysed reaction is taurolithocholate 3-sulfate(in) + ATP + H2O = taurolithocholate 3-sulfate(out) + ADP + phosphate + H(+). It catalyses the reaction leukotriene C4(in) + ATP + H2O = leukotriene C4(out) + ADP + phosphate + H(+). It carries out the reaction 17beta-estradiol 17-O-(beta-D-glucuronate)(in) + ATP + H2O = 17beta-estradiol 17-O-(beta-D-glucuronate)(out) + ADP + phosphate + H(+). The enzyme catalyses (4Z,15Z)-bilirubin IXalpha C8-beta-D-glucuronoside(in) + ATP + H2O = (4Z,15Z)-bilirubin IXalpha C8-beta-D-glucuronoside(out) + ADP + phosphate + H(+). The catalysed reaction is (4Z,15Z)-bilirubin IXalpha C8,C12-beta-D-bisglucuronoside(in) + ATP + H2O = (4Z,15Z)-bilirubin IXalpha C8,C12-beta-D-bisglucuronoside(out) + ADP + phosphate + H(+). In terms of biological role, ATP-dependent transporter of the ATP-binding cassette (ABC) family that binds and hydrolyzes ATP to enable active transport of various substrates including many drugs, toxicants and endogenous compound across cell membranes. Transports a wide variety of conjugated organic anions such as sulfate-, glucuronide- and glutathione (GSH)-conjugates of endo- and xenobiotics substrates. Mediates hepatobiliary excretion of mono- and bis-glucuronidated bilirubin molecules and therefore play an important role in bilirubin detoxification. Also mediates hepatobiliary excretion of others glucuronide conjugates such as 17beta-estradiol 17-glucosiduronic acid and leukotriene C4. Transports sulfated bile salt such as taurolithocholate sulfate. Transports various anticancer drugs, such as anthracycline, vinca alkaloid and methotrexate and HIV-drugs such as protease inhibitors. Confers resistance to several anti-cancer drugs including cisplatin, doxorubicin, epirubicin, methotrexate, etoposide and vincristine. The protein is ATP-binding cassette sub-family C member 2 of Homo sapiens (Human).